The primary structure comprises 501 residues: L-arabinose isomerase (501 aa).

Mn(2+)-binding residues include E306, E333, H350, and H450.

Belongs to the arabinose isomerase family. Homohexamer. The cofactor is Mn(2+).

It catalyses the reaction beta-L-arabinopyranose = L-ribulose. Its pathway is carbohydrate degradation; L-arabinose degradation via L-ribulose; D-xylulose 5-phosphate from L-arabinose (bacterial route): step 1/3. In terms of biological role, catalyzes the conversion of L-arabinose to L-ribulose. This is L-arabinose isomerase from Serratia proteamaculans (strain 568).